Consider the following 707-residue polypeptide: Prolyl endopeptidase-like (707 aa).

Active-site charge relay system residues include S538, D624, and H670.

It belongs to the peptidase S9A family. As to quaternary structure, homodimer.

The protein resides in the cytoplasm. Its subcellular location is the cytosol. Its function is as follows. Serine peptidase whose precise substrate specificity remains unclear. Does not cleave peptides after a arginine or lysine residue. Regulates trans-Golgi network morphology and sorting by regulating the membrane binding of the AP-1 complex. May play a role in the regulation of synaptic vesicle exocytosis. The chain is Prolyl endopeptidase-like (prepl) from Xenopus laevis (African clawed frog).